Reading from the N-terminus, the 115-residue chain is Nitrogenase-stabilizing/protective protein NifW (115 aa).

Belongs to the NifW family. Homotrimer; associates with NifD.

May protect the nitrogenase Fe-Mo protein from oxidative damage. The chain is Nitrogenase-stabilizing/protective protein NifW from Rhodopseudomonas palustris (strain BisB18).